The chain runs to 354 residues: MFCSCLEIVFFLAGRHHSQFPSLPDENETNKSSDSPPTVFSSLPDELILNCLARVSRFYRPSLSLVNKEFQSLIASPDLEATRSRIGVTENHLYVCLESNKNNPNPRWFTLAPIPKEQKVKPIIPSFPYQHPTSSTFVSIGSEIYIIGGFVKRKRSRRVLVLDCRSHQCRRLPNMALPRVSAAADVIDGKIYVVGGSKSKNIDNWGEVFDPETQTWEPIFPTTVDLTTQKSVFPGKLVMGGKVYDMDGLKVNLNLNSCVVEIDNMMCQISVCKGILVWYDSEEDLVWNKSMVFDRLGLDWTKEGKTEIWCAEISLERRGFGELWGFVEWSKKVFTYDGCDSPSDFFLHSAIVTY.

Residues 37–86 (PTVFSSLPDELILNCLARVSRFYRPSLSLVNKEFQSLIASPDLEATRSRI) form the F-box domain. Kelch repeat units lie at residues 143 to 189 (EIYI…VIDG) and 190 to 236 (KIYV…FPGK).

The sequence is that of Putative F-box/kelch-repeat protein At5g03000 from Arabidopsis thaliana (Mouse-ear cress).